Consider the following 906-residue polypeptide: Cadherin-2 (906 aa).

A signal peptide spans methionine 1–alanine 25. A propeptide spanning residues serine 26 to arginine 159 is cleaved from the precursor. Residues serine 96 and serine 135 each carry the phosphoserine modification. Cadherin domains lie at aspartate 160–phenylalanine 267, leucine 268–proline 392, glutamate 393–phenylalanine 497, alanine 498–proline 603, and glutamine 604–arginine 714. The Extracellular segment spans residues aspartate 160–alanine 724. Glutamate 170 serves as a coordination point for Ca(2+). N-linked (GlcNAc...) asparagine glycosylation is present at asparagine 190. Residues aspartate 226, glutamate 228, aspartate 259, methionine 260, asparagine 261, aspartate 262, and asparagine 263 each coordinate Ca(2+). Asparagine 273 carries N-linked (GlcNAc...) asparagine glycosylation. Residues aspartate 293, aspartate 295, and asparagine 301 each coordinate Ca(2+). A glycan (N-linked (GlcNAc...) asparagine) is linked at asparagine 325. Residue aspartate 353 participates in Ca(2+) binding. Residues asparagine 357, asparagine 402, asparagine 572, asparagine 622, asparagine 651, and asparagine 692 are each glycosylated (N-linked (GlcNAc...) asparagine). A helical transmembrane segment spans residues isoleucine 725–methionine 746. The Cytoplasmic segment spans residues lysine 747–aspartate 906. Low complexity predominate over residues serine 863–glycine 880. The interval serine 863–tyrosine 884 is disordered.

In terms of assembly, homodimer (via extracellular region). Can also form heterodimers with other cadherins (via extracellular region). Dimerization occurs in trans, i.e. with a cadherin chain from another cell. Interacts with CDCP1. Interacts with PCDH8; this complex may also include TAOK2. The interaction with PCDH8 may lead to internalization through TAOK2/p38 MAPK pathway. Identified in a complex containing FGFR4, NCAM1, CDH2, PLCG1, FRS2, SRC, SHC1, GAP43 and CTTN. May interact with OBSCN (via protein kinase domain 2). Interacts with FBXO45. Cleaved by MMP24. Ectodomain cleavage leads to the generation of a soluble 90 kDa N-terminal soluble fragment and a 45 kDa membrane-bound C-terminal fragment 1 (CTF1), which is further cleaved by gamma-secretase into a 35 kDa. Cleavage in neural stem cells by MMP24 affects CDH2-mediated anchorage of neural stem cells to ependymocytes in the adult subependymal zone, leading to modulate neural stem cell quiescence. In terms of processing, may be phosphorylated by OBSCN. Detected in liver, kidney, heart and brain capillaries.

Its subcellular location is the cell membrane. It localises to the sarcolemma. The protein localises to the cell junction. It is found in the cell surface. The protein resides in the desmosome. Its subcellular location is the adherens junction. Its function is as follows. Calcium-dependent cell adhesion protein; preferentially mediates homotypic cell-cell adhesion by dimerization with a CDH2 chain from another cell. Cadherins may thus contribute to the sorting of heterogeneous cell types. Acts as a regulator of neural stem cells quiescence by mediating anchorage of neural stem cells to ependymocytes in the adult subependymal zone: upon cleavage by MMP24, CDH2-mediated anchorage is affected, leading to modulate neural stem cell quiescence. Plays a role in cell-to-cell junction formation between pancreatic beta cells and neural crest stem (NCS) cells, promoting the formation of processes by NCS cells. Required for proper neurite branching. Required for pre- and postsynaptic organization. CDH2 may be involved in neuronal recognition mechanism. In hippocampal neurons, may regulate dendritic spine density. In Bos taurus (Bovine), this protein is Cadherin-2 (CDH2).